Here is a 746-residue protein sequence, read N- to C-terminus: F-box only protein 30 (746 aa).

The segment at 49–110 adopts a TRAF-type zinc-finger fold; the sequence is EHRLLCPFER…SYSDRKSYES (62 aa). 2 disordered regions span residues 222-241 and 247-266; these read MDEENNKESFQDKNLKDQDH and IGAVGGVDYSGTSQNAQAEQ. The span at 225 to 241 shows a compositional bias: basic and acidic residues; it reads ENNKESFQDKNLKDQDH. Positions 256 to 266 are enriched in polar residues; sequence SGTSQNAQAEQ. S383 carries the phosphoserine modification. An F-box domain is found at 611 to 659; sequence SDHLSSLPFEVLQHIAGFLDGFSLCQLACVSRLMRDVCGSLLQSRGMVI.

Part of a SCF (SKP1-cullin-F-box) protein ligase complex. Interacts with SKP1, CUL1 and RBX1/ROC1. In terms of processing, auto-ubiquitinated. Post-translationally, may be neddylated. Neddylation may be required for E3 ligase activity, since it was observed only after purification with o-phenanthroline.

Its pathway is protein modification; protein ubiquitination. Substrate-recognition component of the SCF (SKP1-CUL1-F-box protein)-type E3 ubiquitin ligase complex. Required for muscle atrophy following denervation. The chain is F-box only protein 30 (Fbxo30) from Mus musculus (Mouse).